Consider the following 308-residue polypeptide: Taste receptor type 2 member 107 (308 aa).

Residues 1–7 (MLNSAEG) lie on the Extracellular side of the membrane. Residues 8–28 (ILLCVVTSEAVLGVLGDTYIA) traverse the membrane as a helical segment. The Cytoplasmic portion of the chain corresponds to 29-43 (LFNCMDYAKNKKLSK). Residues 44-64 (IGFILIGLAISRIGVVWIIIL) traverse the membrane as a helical segment. Topologically, residues 65 to 87 (QGYIQVFFPHMLTSGNITEYITY) are extracellular. An N-linked (GlcNAc...) asparagine glycan is attached at asparagine 80. Residues 88-108 (IWVFLNHLSVWFVTNLNILYF) form a helical membrane-spanning segment. Residues 109–125 (LKIANFSNSVFLWLKRR) lie on the Cytoplasmic side of the membrane. Residues 126 to 146 (VNAVFIFLSGCLLTSWLLCFP) traverse the membrane as a helical segment. The Extracellular segment spans residues 147-180 (QMTKILQNSKMHQRNTSWVHQRKNYFLINQSVTN). 2 N-linked (GlcNAc...) asparagine glycosylation sites follow: asparagine 161 and asparagine 175. A helical membrane pass occupies residues 181-201 (LGIFFFIIVSLITCFLLIVFL). Topologically, residues 202 to 232 (WRHVRQMHSDVSGFRDHSTKVHVKAMKFLIS) are cytoplasmic. Residues 233 to 253 (FMVFFILHFVGLSIEVLCFIL) form a helical membrane-spanning segment. Topologically, residues 254–258 (PQNKL) are extracellular. Residues 259–279 (LFITGLTATCLYPCGHSIIVI) traverse the membrane as a helical segment. Residues 280 to 308 (LGNKQLKQASLKALQQLKCCETKGNFRVK) lie on the Cytoplasmic side of the membrane.

The protein belongs to the G-protein coupled receptor T2R family.

It is found in the membrane. Functionally, putative taste receptor which may play a role in the perception of bitterness. The protein is Taste receptor type 2 member 107 of Mus musculus (Mouse).